The chain runs to 427 residues: Enolase (427 aa).

A (2R)-2-phosphoglycerate-binding site is contributed by Gln-163. The Proton donor role is filled by Glu-205. Positions 242, 285, and 312 each coordinate Mg(2+). (2R)-2-phosphoglycerate-binding residues include Lys-337, Arg-366, Ser-367, and Lys-388. Lys-337 functions as the Proton acceptor in the catalytic mechanism.

Belongs to the enolase family. Mg(2+) is required as a cofactor.

The protein localises to the cytoplasm. It is found in the secreted. The protein resides in the cell surface. It carries out the reaction (2R)-2-phosphoglycerate = phosphoenolpyruvate + H2O. It participates in carbohydrate degradation; glycolysis; pyruvate from D-glyceraldehyde 3-phosphate: step 4/5. Its function is as follows. Catalyzes the reversible conversion of 2-phosphoglycerate (2-PG) into phosphoenolpyruvate (PEP). It is essential for the degradation of carbohydrates via glycolysis. The chain is Enolase from Polaromonas sp. (strain JS666 / ATCC BAA-500).